The primary structure comprises 156 residues: Cyanate hydratase (156 aa).

Residues arginine 96, glutamate 99, and serine 122 contribute to the active site.

Belongs to the cyanase family.

It carries out the reaction cyanate + hydrogencarbonate + 3 H(+) = NH4(+) + 2 CO2. Its function is as follows. Catalyzes the reaction of cyanate with bicarbonate to produce ammonia and carbon dioxide. In Escherichia coli (strain ATCC 8739 / DSM 1576 / NBRC 3972 / NCIMB 8545 / WDCM 00012 / Crooks), this protein is Cyanate hydratase.